The following is a 400-amino-acid chain: Subtilisin-like protease CPC735_047380 (400 aa).

Residues 1 to 19 (MARINVVVSFLAALAVVQA) form the signal peptide. Residues 20–118 (AQLLNLDGQK…IEPQRTFRAF (99 aa)) constitute a propeptide that is removed on maturation. Positions 35-116 (SYVVVMNDGL…NYIEPQRTFR (82 aa)) constitute an Inhibitor I9 domain. The region spanning 128-400 (SWGLGRISHT…DKLLYNGSGQ (273 aa)) is the Peptidase S8 domain. The N-linked (GlcNAc...) asparagine glycan is linked to Asn153. Catalysis depends on charge relay system residues Asp160 and His191. 2 N-linked (GlcNAc...) asparagine glycosylation sites follow: Asn244 and Asn252. Ser346 functions as the Charge relay system in the catalytic mechanism. Asn396 carries N-linked (GlcNAc...) asparagine glycosylation.

This sequence belongs to the peptidase S8 family.

It localises to the secreted. Its function is as follows. Secreted subtilisin-like serine protease with keratinolytic activity that contributes to pathogenicity. The chain is Subtilisin-like protease CPC735_047380 from Coccidioides posadasii (strain C735) (Valley fever fungus).